Here is a 329-residue protein sequence, read N- to C-terminus: Two pore potassium channel protein sup-9 (329 aa).

Residues Met-1–Thr-8 are Cytoplasmic-facing. A helical transmembrane segment spans residues Leu-9–Leu-29. The N-linked (GlcNAc...) asparagine glycan is linked to Asn-53. The pore-forming intramembrane region spans Phe-80–Thr-100. A Selectivity filter motif is present at residues Thr-93–His-98. The chain crosses the membrane as a helical span at residues Val-108–Ile-128. Residues Gly-129 to Asp-157 lie on the Cytoplasmic side of the membrane. The helical transmembrane segment at Leu-158–Ser-178 threads the bilayer. Asn-182 carries N-linked (GlcNAc...) asparagine glycosylation. Positions Phe-186–Ala-206 form an intramembrane region, pore-forming. A Selectivity filter motif is present at residues Thr-198 to Asp-203. The chain crosses the membrane as a helical span at residues Val-220–Leu-240. Residues Leu-241–Tyr-329 lie on the Cytoplasmic side of the membrane. Residues Ser-289–Tyr-296 form a may be important for regulation by and/or interaction with sup-10 region. The disordered stretch occupies residues His-307–Tyr-329.

This sequence belongs to the two pore domain potassium channel (TC 1.A.1.8) family. As to quaternary structure, may form a complex with the regulatory subunits unc-93 and sup-10. Low levels along surface of body-wall muscle cells, in vulval and intestinal muscles and, more weakly, in anal depressor and sphincter muscles. Also expressed in a subset of head neurons.

The protein localises to the membrane. Potassium channel involved in coordination of muscle contraction. Activity is regulated by sup-18. The polypeptide is Two pore potassium channel protein sup-9 (Caenorhabditis elegans).